We begin with the raw amino-acid sequence, 634 residues long: MVSWGRGKDAYYLYISREQEEDDDDSLSFYSSQKDTEDEFCGCLFPDPEIPGSSSSSGCSSSSTELYDLAAAHAALISRQQQILSQAIPIIPEHQLAAVAAHHQHHQQLHPSVQYQLVAAATHHNHHQPQAAQPHYSAVVPRSDVIQQPPHFALHHHLQNLVQQQQQQQAHHHHQQLVGEMALVSHTHPAAVGSTTCYEKNQQKQQQVQQIPTQPQVAHVSSNAILAAAQPFYPPPVQDSQPDRPIGYGAFGVVWSVTDPRSGKRVALKKMPNVFQNLASCKRVFREIKMLSSFRHDNVLSLLDILQPANPSFFQELYVLTELMQSDLHKIIVSPQALTPDHVKVFVYQILRGLKYLHTANILHRDIKPGNLLVNSNCILKICDFGLARTWDQRDRLNMTHEVVTQYYRAPELLMGARRYTGAVDIWSVGCIFAELLQRKILFQAAGPIEQLQMIIDLLGTPSQEAMKYACEGAKNHVLRAGLRAPDTQRLYKIASPDDKNHEAVDLLQKLLHFDPDKRISVEEALQHRYLEEGRLRFHSCMCSCCYTKPNMPSRLFAQDLDPRHESPFDPKWEKDMSRLSMFELREKMYQFVMDRPALYGVALCINPQSAAYKNFASSSVAQASELPPSPQAW.

A Protein kinase domain is found at 240-531 (SQPDRPIGYG…VEEALQHRYL (292 aa)). Residues 246–254 (IGYGAFGVV) and lysine 269 contribute to the ATP site. Residue aspartate 366 is the Proton acceptor of the active site.

The protein belongs to the protein kinase superfamily. CMGC Ser/Thr protein kinase family. MAP kinase subfamily. As to quaternary structure, component of the beta-catenin-lit-1 complex (also called the lit-1/wrm-1 complex or the wrm-1/lit-1 kinase complex) at least composed of lit-1 and wrm-1. Interacts with wrm-1 (via N-terminus); the interaction is direct and activates lit-1 kinase activity which leads to the phosphorylation of pop-1. This promotes pop-1 interaction with par-5 and translocation of pop-1 from the nucleus to the cytoplasm. Interacts with pop-1 (when phosphorylated on 'Ser-118' and 'Ser-127'); the interaction is dependent on the beta-catenin-lit-1 complex. It depends on Mg(2+) as a cofactor. Expressed in the pharynx and seam and vulval cells.

The protein localises to the cytoplasm. It is found in the cell cortex. The protein resides in the nucleus. It catalyses the reaction L-seryl-[protein] + ATP = O-phospho-L-seryl-[protein] + ADP + H(+). It carries out the reaction L-threonyl-[protein] + ATP = O-phospho-L-threonyl-[protein] + ADP + H(+). Its function is as follows. Has a role in the Wnt signaling pathway controlling the asymmetry of cell divisions during embryogenesis. Operates in the AB and EMS cell lineages influencing cell specification. Required for body wall muscle development, endoderm development, pop-1 asymmetry and T-cell division asymmetry. Component of the beta-catenin-lit-1 complex which promotes the phosphorylation, down-regulation and subcellular relocation of pop-1. Regulates plp-1 nuclear localization in embryos. Plays a role in male tail tip morphogenesis. The polypeptide is Serine/threonine kinase NLK (Caenorhabditis elegans).